We begin with the raw amino-acid sequence, 171 residues long: Photosystem I assembly protein Ycf3 (171 aa).

TPR repeat units lie at residues 35–68, 72–105, and 120–153; these read AFTYYRDGMSAQSEGEYAEALQNYYKAMRLEIDP, SYILYNIGLIHTSNGEHAKALEYYFQALERNPSL, and GEQAIQQGDPGTSEIWFDKAAEYWKQAIALAPNN.

It belongs to the Ycf3 family.

The protein resides in the plastid. It localises to the chloroplast thylakoid membrane. Essential for the assembly of the photosystem I (PSI) complex. May act as a chaperone-like factor to guide the assembly of the PSI subunits. The protein is Photosystem I assembly protein Ycf3 of Psilotum nudum (Whisk fern).